The following is a 537-amino-acid chain: 2-succinyl-5-enolpyruvyl-6-hydroxy-3-cyclohexene-1-carboxylate synthase (537 aa).

Belongs to the TPP enzyme family. MenD subfamily. Homodimer. The cofactor is Mg(2+). Requires Mn(2+) as cofactor. It depends on thiamine diphosphate as a cofactor.

The catalysed reaction is isochorismate + 2-oxoglutarate + H(+) = 5-enolpyruvoyl-6-hydroxy-2-succinyl-cyclohex-3-ene-1-carboxylate + CO2. It participates in quinol/quinone metabolism; 1,4-dihydroxy-2-naphthoate biosynthesis; 1,4-dihydroxy-2-naphthoate from chorismate: step 2/7. Its pathway is quinol/quinone metabolism; menaquinone biosynthesis. Functionally, catalyzes the thiamine diphosphate-dependent decarboxylation of 2-oxoglutarate and the subsequent addition of the resulting succinic semialdehyde-thiamine pyrophosphate anion to isochorismate to yield 2-succinyl-5-enolpyruvyl-6-hydroxy-3-cyclohexene-1-carboxylate (SEPHCHC). In Desulfotalea psychrophila (strain LSv54 / DSM 12343), this protein is 2-succinyl-5-enolpyruvyl-6-hydroxy-3-cyclohexene-1-carboxylate synthase.